Here is a 143-residue protein sequence, read N- to C-terminus: Small ribosomal subunit protein eS19B (143 aa).

This sequence belongs to the eukaryotic ribosomal protein eS19 family. In terms of assembly, component of the small ribosomal subunit (SSU). Mature yeast ribosomes consist of a small (40S) and a large (60S) subunit. The 40S small subunit contains 1 molecule of ribosomal RNA (18S rRNA) and at least 33 different proteins. The large 60S subunit contains 3 rRNA molecules (25S, 5.8S and 5S rRNA) and at least 46 different proteins.

The protein localises to the cytoplasm. It localises to the nucleus. Its function is as follows. Component of the ribosome, a large ribonucleoprotein complex responsible for the synthesis of proteins in the cell. The small ribosomal subunit (SSU) binds messenger RNAs (mRNAs) and translates the encoded message by selecting cognate aminoacyl-transfer RNA (tRNA) molecules. The large subunit (LSU) contains the ribosomal catalytic site termed the peptidyl transferase center (PTC), which catalyzes the formation of peptide bonds, thereby polymerizing the amino acids delivered by tRNAs into a polypeptide chain. The nascent polypeptides leave the ribosome through a tunnel in the LSU and interact with protein factors that function in enzymatic processing, targeting, and the membrane insertion of nascent chains at the exit of the ribosomal tunnel. eS19 is required for proper maturation of the small (40S) ribosomal subunit. Binds to 40S pre-ribosomal particles, probably required after association of NOC4 but before association of ENP1, TSR1 and RIO2 with 20/21S pre-rRNA. This Schizosaccharomyces pombe (strain 972 / ATCC 24843) (Fission yeast) protein is Small ribosomal subunit protein eS19B (rps1902).